The following is a 192-amino-acid chain: MTAIWIAIAALSALALAFGLVLGYASRRFEVENDPIVEEVEAMLPQSQCGQCGYPGCRPYAEAVSLNGESINKCGPGGEAMMLKLAEKLNVDPQPLEGDADIQAPARHVAWIDESNCIGCTKCIQACPVDAIIGSTKAVHTVVSDLCTGCDLCISPCPTDCIELRPIAPTPANWKWDLDTIPVRVIQVERHA.

The hydrophobic stretch occupies residues 1–26 (MTAIWIAIAALSALALAFGLVLGYAS). Positions 32–91 (ENDPIVEEVEAMLPQSQCGQCGYPGCRPYAEAVSLNGESINKCGPGGEAMMLKLAEKLNV) constitute a 4Fe-4S domain. [4Fe-4S] cluster is bound by residues C49, C52, C57, C74, C117, C120, C123, C127, C147, C150, C153, and C157. 4Fe-4S ferredoxin-type domains lie at 108 to 137 (HVAW…GSTK) and 138 to 167 (AVHT…LRPI).

This sequence belongs to the 4Fe4S bacterial-type ferredoxin family. RnfB subfamily. In terms of assembly, the complex is composed of six subunits: RnfA, RnfB, RnfC, RnfD, RnfE and RnfG. The cofactor is [4Fe-4S] cluster.

The protein localises to the cell inner membrane. Its function is as follows. Part of a membrane-bound complex that couples electron transfer with translocation of ions across the membrane. The protein is Ion-translocating oxidoreductase complex subunit B of Pectobacterium atrosepticum (strain SCRI 1043 / ATCC BAA-672) (Erwinia carotovora subsp. atroseptica).